Here is a 379-residue protein sequence, read N- to C-terminus: MALYRTARRPLQMMLFSRLGNPEQNYSSWARKDASQSAFGMFVRLFSAHAPAAAEQMSLIKQLRERTSAPIKDVKASLVDCNWDIEAAQKDLRKRGKVLASKKSGRAATEGLLALAQNEGKAALIELNCETDFVARNDIFQCLALSLAKQALLTENTAQQASGIHPVGPECLEDLMINLEHPKISGETTVQNAITEVAAMMGENVKLRRGFVMSTSLPGVLSTYLHTSPQPGLGRIAGLLSLEIEDGNSQLDVLHHVGSELAMHVVAAKPLFLTKELVSSDALESEREILKSQAESTGKSQMAIEKMVEGRLRKYYEEVVLMEQKFIINDAVNVKTVLNNLSKEVGSPVKIGSFFRMEVGEGIQRLEATSADEPVAQAA.

The N-terminal 45 residues, 1 to 45 (MALYRTARRPLQMMLFSRLGNPEQNYSSWARKDASQSAFGMFVRL), are a transit peptide targeting the mitochondrion.

The protein belongs to the EF-Ts family.

Its subcellular location is the mitochondrion. Associates with the EF-Tu.GDP complex and induces the exchange of GDP to GTP. It remains bound to the aminoacyl-tRNA.EF-Tu.GTP complex up to the GTP hydrolysis stage on the ribosome. In Ricinus communis (Castor bean), this protein is Elongation factor Ts, mitochondrial.